Reading from the N-terminus, the 104-residue chain is L-rhamnose mutarotase (104 aa).

Y18 is a substrate binding site. H22 acts as the Proton donor in catalysis. Substrate-binding positions include Y41 and 76–77 (WW).

This sequence belongs to the rhamnose mutarotase family. In terms of assembly, homodimer.

Its subcellular location is the cytoplasm. The catalysed reaction is alpha-L-rhamnose = beta-L-rhamnose. It participates in carbohydrate metabolism; L-rhamnose metabolism. Functionally, involved in the anomeric conversion of L-rhamnose. The sequence is that of L-rhamnose mutarotase from Oceanobacillus iheyensis (strain DSM 14371 / CIP 107618 / JCM 11309 / KCTC 3954 / HTE831).